A 234-amino-acid chain; its full sequence is Uridylate kinase (234 aa).

9-10 serves as a coordination point for ATP; the sequence is GS. A UMP-binding site is contributed by G43. ATP contacts are provided by G44 and R48. UMP-binding positions include D65 and 113–119; that span reads VIPGQTT. T139, Y145, and D148 together coordinate ATP.

The protein belongs to the UMP kinase family. Homohexamer.

It localises to the cytoplasm. It carries out the reaction UMP + ATP = UDP + ADP. Its pathway is pyrimidine metabolism; CTP biosynthesis via de novo pathway; UDP from UMP (UMPK route): step 1/1. With respect to regulation, inhibited by UTP. In terms of biological role, catalyzes the reversible phosphorylation of UMP to UDP. This chain is Uridylate kinase, found in Methanococcoides burtonii (strain DSM 6242 / NBRC 107633 / OCM 468 / ACE-M).